Reading from the N-terminus, the 1918-residue chain is Diacylglycerol kinase eta (1918 aa).

Basic and acidic residues predominate over residues 1 to 10 (MAHLKLDTLH). The disordered stretch occupies residues 1–37 (MAHLKLDTLHVQRSPRGSRRSSPSSGRSSACSSGSIS). Residues 20-37 (RSSPSSGRSSACSSGSIS) show a composition bias toward low complexity. Positions 82-175 (AIIKEGFLLK…WLGGLKTATA (94 aa)) constitute a PH domain. Phorbol-ester/DAG-type zinc fingers lie at residues 195–245 (HHHW…IANC) and 268–319 (PHQW…AVAC). In terms of domain architecture, DAGKc spans 350–486 (GNFSPLLVFV…DRWSIMVFEK (137 aa)). Disordered regions lie at residues 783–805 (GANI…NTPT), 1017–1067 (TTLC…DDNP), 1177–1212 (PNTI…GDSI), and 1380–1399 (ERDK…TEEA). Residues 1177 to 1189 (PNTILTTSTSPTK) are compositionally biased toward polar residues. The SAM domain maps to 1855–1918 (WSVNEVVTWL…LQAIKDLSEN (64 aa)).

Belongs to the eukaryotic diacylglycerol kinase family.

Its subcellular location is the cytoplasm. The enzyme catalyses a 1,2-diacyl-sn-glycerol + ATP = a 1,2-diacyl-sn-glycero-3-phosphate + ADP + H(+). Phosphorylates diacylglycerol (DAG) to generate phosphatidic acid (PA). In Drosophila erecta (Fruit fly), this protein is Diacylglycerol kinase eta.